Reading from the N-terminus, the 365-residue chain is D-alanine--D-alanine ligase (365 aa).

Residues 135-345 form the ATP-grasp domain; it reads KLLLKSFNIP…YESLVDNLVS (211 aa). 168-223 serves as a coordination point for ATP; that stretch reads KQSLNYPVIVKPAMLGSSIGISIAYNDTQIEKCIEEAFEYDLTVVVEKFMKVREIE. The Mg(2+) site is built by aspartate 298, glutamate 312, and asparagine 314.

It belongs to the D-alanine--D-alanine ligase family. It depends on Mg(2+) as a cofactor. Mn(2+) is required as a cofactor.

The protein localises to the cytoplasm. The catalysed reaction is 2 D-alanine + ATP = D-alanyl-D-alanine + ADP + phosphate + H(+). It functions in the pathway cell wall biogenesis; peptidoglycan biosynthesis. Its function is as follows. Cell wall formation. The sequence is that of D-alanine--D-alanine ligase from Borrelia hermsii (strain HS1 / DAH).